The sequence spans 538 residues: Efflux pump radE (538 aa).

3 stretches are compositionally biased toward basic and acidic residues: residues 1 to 12 (MATSRDFGREPP), 20 to 35 (EAGH…VSEH), and 65 to 74 (DPKEEERDPN). Disordered stretches follow at residues 1-35 (MATS…VSEH) and 65-90 (DPKE…PQNW). 12 consecutive transmembrane segments (helical) span residues 100–120 (AVLS…APGI), 134–154 (LATF…LVLA), 163–183 (VVIY…CALS), 194–214 (FLCG…IADL), 225–245 (SVWS…GGFL), 253–273 (WIFW…LLVL), 327–347 (PICL…YFMI), 362–382 (EGIV…GVVV), 409–429 (IPPT…YGWT), 436–456 (WAVP…INIS), 482–502 (IFGA…GLGW), and 505–525 (SLLA…FYYG).

It belongs to the major facilitator superfamily.

It is found in the cell membrane. In terms of biological role, efflux pump that might be required for efficient secretion of radicicol or other secondary metabolies produced by the radicicol gene cluster. The chain is Efflux pump radE from Floropilus chiversii (Chaetomium chiversii).